We begin with the raw amino-acid sequence, 164 residues long: Ribosome maturation factor RimM (164 aa).

Positions 90-161 (EGRYYVADII…EIIIKPVKTW (72 aa)) constitute a PRC barrel domain.

Belongs to the RimM family. In terms of assembly, binds ribosomal protein uS19.

Its subcellular location is the cytoplasm. An accessory protein needed during the final step in the assembly of 30S ribosomal subunit, possibly for assembly of the head region. Essential for efficient processing of 16S rRNA. May be needed both before and after RbfA during the maturation of 16S rRNA. It has affinity for free ribosomal 30S subunits but not for 70S ribosomes. The sequence is that of Ribosome maturation factor RimM from Clostridium tetani (strain Massachusetts / E88).